A 423-amino-acid polypeptide reads, in one-letter code: uncharacterized protein (423 aa).

Lysine 181, aspartate 183, and glutamate 184 together coordinate Mg(2+). An N6-carboxylysine modification is found at lysine 181.

This sequence belongs to the RuBisCO large chain family. Type IV subfamily. Requires Mg(2+) as cofactor.

Its function is as follows. May be involved in sulfur metabolism and oxidative stress response. Does not show RuBisCO activity. This is an uncharacterized protein from Bordetella bronchiseptica (strain ATCC BAA-588 / NCTC 13252 / RB50) (Alcaligenes bronchisepticus).